The following is a 185-amino-acid chain: UPF0301 protein Csal_0058 (185 aa).

Belongs to the UPF0301 (AlgH) family.

This chain is UPF0301 protein Csal_0058, found in Chromohalobacter salexigens (strain ATCC BAA-138 / DSM 3043 / CIP 106854 / NCIMB 13768 / 1H11).